The primary structure comprises 710 residues: MKVLLHLPALLASLTLLQTAASASDDPTAETDIIHDTVEEVKVWVNKAFLDSRDRLKMAMTTKIHSTRHLSDYLKHAKGRTRTAIRSGQVWEESLKKLSQFLTNVTGQGLDLTLLSWEAGCDPPAPTMTCNISSPYRTITGYCNNRKNPALGSANRALARWLPAEYEDGLSLPYGWTPGKMRNGFPLPQPREVSNQIAAYLNEEDVLDQKRSMLFMQWGQIVDHDMDFAPETEMGSDTYTKAQCDEHCIQGDNCFPIMFPPGDPKLKTQGKCMPFFRAGFVCPTPPYKSLAREQINALTSFLDASLVYSPEPSLANRLRNLSSPLGLMAVNEEVSDNGRPFPPFVKMKPSPCEVINATAGVPCFLAGDSRASEQILLATSHTLFIREHNRLATELSRLNPHWDRETLYQEARKIMGAFIQITTFRDYLPILLGDEMQKWIPPYQGYNESVDPRISNVFTFALRFGHLEIPSTVYRLDENYQPWGSESELPLHTVFFNTWRLVKDGGIDPLVRGLLAKNAKLMHQNKMMTGELRNKLFQPNHTIHGFDLASINIQRSRDHGQPGYNSWRAFCGLSQPKTLEELSAVMKNEVLAKKLMDLYGTPSNIDIWLGAVAEPLVHRGRVGPLLTCLLGQQFQRIRDGDRFWWENPGVFTEKQRESLQKMSFSRLVCDNTGIDKVPLNPFQANAYPHGFVDCSSIDKLDLSPWASVKE.

A signal peptide spans methionine 1–alanine 23. The propeptide occupies serine 24–arginine 80. Cysteine 130 and cysteine 143 are joined by a disulfide. A heme b-binding site is contributed by aspartate 223. The active-site Proton acceptor is the histidine 224. Aspartate 225 is a Ca(2+) binding site. 2 cysteine pairs are disulfide-bonded: cysteine 244–cysteine 254 and cysteine 248–cysteine 272. Positions 299, 301, 303, and 305 each coordinate Ca(2+). Residue serine 313 is modified to Phosphoserine. An intrachain disulfide couples cysteine 352 to cysteine 363. The heme b site is built by glutamate 373 and histidine 466. Tyrosine 480 is subject to 3'-nitrotyrosine. 2 disulfides stabilise this stretch: cysteine 571-cysteine 628 and cysteine 669-cysteine 694.

It belongs to the peroxidase family. Ca(2+) serves as cofactor. Requires heme b as cofactor. As to expression, expressed in the colon, including colonocytes and mucin-containing goblet cells. Not detected in the ileum.

The protein resides in the secreted. The protein localises to the cytoplasm. It carries out the reaction 2 a phenolic donor + H2O2 = 2 a phenolic radical donor + 2 H2O. The catalysed reaction is thiocyanate + H2O2 + H(+) = hypothiocyanous acid + H2O. It catalyses the reaction iodide + H2O2 = hypoiodite + H2O. In terms of biological role, heme-containing oxidoreductase which catalyzes the conversion of thiocyanate (SCN(-)) into antimicrobial agent hypothiocyanous acid (OSCN(-)) in the presence of hydrogen peroxide (H2O2). Also involved in the conversion of iodide (I(-)) into hypoiodite (IO(-)) in the presence of H2O2. Responsible for the inactivation of a wide range of micro-organisms and hence, important component of defense mechanism. May be implicated in airway host defense against infection. May contribute to maintaining an appropriate H2O2 cellular level, therefore protecting cells from H2O2-caused injuries and inflammation. In Mus musculus (Mouse), this protein is Lactoperoxidase.